The following is a 96-amino-acid chain: Small ribosomal subunit protein bS6 (96 aa).

It belongs to the bacterial ribosomal protein bS6 family.

Binds together with bS18 to 16S ribosomal RNA. The chain is Small ribosomal subunit protein bS6 from Streptococcus pneumoniae serotype 2 (strain D39 / NCTC 7466).